The sequence spans 391 residues: Thioredoxin-interacting protein (391 aa).

A Glycyl lysine isopeptide (Lys-Gly) (interchain with G-Cter in ubiquitin) cross-link involves residue Lys-212. Ser-361 carries the post-translational modification Phosphoserine.

This sequence belongs to the arrestin family. As to quaternary structure, homodimer; disulfide-linked. Interacts with TXN/thioredoxin through its redox-active site. Interacts with transcriptional repressors ZBTB16, ZBTB32 and HDAC1. Interacts with DDIT4. Ubiquitinated; undergoes heterotypic 'Lys-48'-/'Lys-63'-branched polyubiquitination catalyzed by ITCH and UBR5 resulting in proteasomal degradation. Deubiquitinated by USP5, leading to TXNIP stabilization.

Its subcellular location is the cytoplasm. The protein localises to the nucleus. Functionally, may act as an oxidative stress mediator by inhibiting thioredoxin activity or by limiting its bioavailability. Interacts with COPS5 and restores COPS5-induced suppression of CDKN1B stability, blocking the COPS5-mediated translocation of CDKN1B from the nucleus to the cytoplasm. Functions as a transcriptional repressor, possibly by acting as a bridge molecule between transcription factors and corepressor complexes, and over-expression will induce G0/G1 cell cycle arrest. Required for the maturation of natural killer cells. Acts as a suppressor of tumor cell growth. Inhibits the proteasomal degradation of DDIT4, and thereby contributes to the inhibition of the mammalian target of rapamycin complex 1 (mTORC1). This chain is Thioredoxin-interacting protein (TXNIP), found in Homo sapiens (Human).